The primary structure comprises 351 residues: Histidinol-phosphate aminotransferase (351 aa).

N6-(pyridoxal phosphate)lysine is present on Lys221.

It belongs to the class-II pyridoxal-phosphate-dependent aminotransferase family. Histidinol-phosphate aminotransferase subfamily. Homodimer. It depends on pyridoxal 5'-phosphate as a cofactor.

The catalysed reaction is L-histidinol phosphate + 2-oxoglutarate = 3-(imidazol-4-yl)-2-oxopropyl phosphate + L-glutamate. Its pathway is amino-acid biosynthesis; L-histidine biosynthesis; L-histidine from 5-phospho-alpha-D-ribose 1-diphosphate: step 7/9. The chain is Histidinol-phosphate aminotransferase from Staphylococcus haemolyticus (strain JCSC1435).